The sequence spans 188 residues: Phosphoribosylglycinamide formyltransferase (188 aa).

A N(1)-(5-phospho-beta-D-ribosyl)glycinamide-binding site is contributed by 12–14; it reads GSN. Residues Lys66, 91-94, and Asn108 contribute to the (6R)-10-formyltetrahydrofolate site; that span reads MRLI. His110 serves as the catalytic Proton donor.

It belongs to the GART family.

The catalysed reaction is N(1)-(5-phospho-beta-D-ribosyl)glycinamide + (6R)-10-formyltetrahydrofolate = N(2)-formyl-N(1)-(5-phospho-beta-D-ribosyl)glycinamide + (6S)-5,6,7,8-tetrahydrofolate + H(+). The protein operates within purine metabolism; IMP biosynthesis via de novo pathway; N(2)-formyl-N(1)-(5-phospho-D-ribosyl)glycinamide from N(1)-(5-phospho-D-ribosyl)glycinamide (10-formyl THF route): step 1/1. In terms of biological role, catalyzes the transfer of a formyl group from 10-formyltetrahydrofolate to 5-phospho-ribosyl-glycinamide (GAR), producing 5-phospho-ribosyl-N-formylglycinamide (FGAR) and tetrahydrofolate. This is Phosphoribosylglycinamide formyltransferase from Staphylococcus aureus (strain Mu50 / ATCC 700699).